Reading from the N-terminus, the 704-residue chain is Polyribonucleotide nucleotidyltransferase (704 aa).

Positions 486 and 492 each coordinate Mg(2+). The KH domain occupies 553–612; sequence PKIVIVKINPDKIRDVIGPGGKQINKIIEETGVKIDTEQDGTIYISSANEEMNARAKQII. The S1 motif domain occupies 622–690; the sequence is GEYYLSTVKR…KQGRVNLSRK (69 aa).

It belongs to the polyribonucleotide nucleotidyltransferase family. Mg(2+) is required as a cofactor.

The protein resides in the cytoplasm. It carries out the reaction RNA(n+1) + phosphate = RNA(n) + a ribonucleoside 5'-diphosphate. Its function is as follows. Involved in mRNA degradation. Catalyzes the phosphorolysis of single-stranded polyribonucleotides processively in the 3'- to 5'-direction. This is Polyribonucleotide nucleotidyltransferase from Lysinibacillus sphaericus (strain C3-41).